A 61-amino-acid polypeptide reads, in one-letter code: Photosystem II reaction center protein K (61 aa).

Residues 1 to 24 (MLNIFSLICICLNSALYSSNFFFA) constitute a propeptide that is removed on maturation. A helical membrane pass occupies residues 40-60 (MPVIPLFFFLLAFVWQAAVSF).

Belongs to the PsbK family. As to quaternary structure, PSII is composed of 1 copy each of membrane proteins PsbA, PsbB, PsbC, PsbD, PsbE, PsbF, PsbH, PsbI, PsbJ, PsbK, PsbL, PsbM, PsbT, PsbX, PsbY, PsbZ, Psb30/Ycf12, at least 3 peripheral proteins of the oxygen-evolving complex and a large number of cofactors. It forms dimeric complexes.

The protein resides in the plastid. It localises to the chloroplast thylakoid membrane. Functionally, one of the components of the core complex of photosystem II (PSII). PSII is a light-driven water:plastoquinone oxidoreductase that uses light energy to abstract electrons from H(2)O, generating O(2) and a proton gradient subsequently used for ATP formation. It consists of a core antenna complex that captures photons, and an electron transfer chain that converts photonic excitation into a charge separation. This Vitis vinifera (Grape) protein is Photosystem II reaction center protein K.